A 1083-amino-acid chain; its full sequence is Rho GTPase-activating protein 39 (1083 aa).

Position 2 is an N-acetylserine (Ser2). WW domains follow at residues Asn25–Gly58 and Arg63–Gly97. Positions Lys110–Ala154 are disordered. The segment covering Arg117–Glu141 has biased composition (low complexity). At Ser169 the chain carries Phosphoserine. Residues Ala226–Gln369 form a disordered region. Over residues Pro245–Thr256 the composition is skewed to polar residues. Basic and acidic residues predominate over residues Pro268–Glu280. Phosphoserine is present on residues Ser286, Ser384, Ser388, Ser406, and Ser407. Disordered regions lie at residues Gly405–Gly545 and Met570–Val599. 2 stretches are compositionally biased toward polar residues: residues Ser474–Ser488 and Arg573–Gly582. Residues Ser604, Ser690, Ser715, and Ser726 each carry the phosphoserine modification. The MyTH4 domain occupies Trp722–Lys879. The Rho-GAP domain maps to Ser890–Phe1078.

It localises to the nucleus. The protein is Rho GTPase-activating protein 39 (ARHGAP39) of Homo sapiens (Human).